The primary structure comprises 356 residues: Butyrate kinase 2 (356 aa).

This sequence belongs to the acetokinase family. As to quaternary structure, homodimer.

The protein resides in the cytoplasm. It catalyses the reaction butanoate + ATP = butanoyl phosphate + ADP. It participates in lipid metabolism; butanoate metabolism. Catalyzes the conversion of butyryl-CoA through butyryl phosphate to butyrate. The chain is Butyrate kinase 2 (buk2) from Clostridium acetobutylicum (strain ATCC 824 / DSM 792 / JCM 1419 / IAM 19013 / LMG 5710 / NBRC 13948 / NRRL B-527 / VKM B-1787 / 2291 / W).